We begin with the raw amino-acid sequence, 610 residues long: UvrABC system protein C (610 aa).

The 80-residue stretch at threonine 13–alanine 92 folds into the GIY-YIG domain. The UVR domain maps to lysine 204–threonine 239.

It belongs to the UvrC family. As to quaternary structure, interacts with UvrB in an incision complex.

The protein resides in the cytoplasm. Its function is as follows. The UvrABC repair system catalyzes the recognition and processing of DNA lesions. UvrC both incises the 5' and 3' sides of the lesion. The N-terminal half is responsible for the 3' incision and the C-terminal half is responsible for the 5' incision. The protein is UvrABC system protein C of Protochlamydia amoebophila (strain UWE25).